The following is a 311-amino-acid chain: MSQSLISFSNLDNWLFVAPALLLAVLSGYLSERVGIVNIAINGGMVFGGMFLSLMSYAFVPNANDSAPSWSLAISIPLSVIFASAVGFLFGIAAIKLKADHVIVGTGVNLLGTGINFFVAQNARSLLNDTDLRVRYSFVRTGNSVSIEGIAIFAFAIIFVLLVWYLMNFTKTGLRYRAVGENPNVIDTQGISVYKYQWFGVMASTMVAALAGCCFALSPQVPSFSSGDVSGFGFIAIAIMIISMWRIIPSIVISPLFALAYVLTTGVVGNANNTYLLRTIPFIISLLVMMVFGYLNVGPKNVGKHFDKGLR.

The next 9 membrane-spanning stretches (helical) occupy residues 11–31 (LDNWLFVAPALLLAVLSGYLS), 34–54 (VGIVNIAINGGMVFGGMFLSL), 72–92 (LAISIPLSVIFASAVGFLFGI), 101–121 (HVIVGTGVNLLGTGINFFVAQ), 147–167 (IEGIAIFAFAIIFVLLVWYLM), 198–218 (WFGVMASTMVAALAGCCFALS), 233–253 (GFIAIAIMIISMWRIIPSIVI), 257–277 (FALAYVLTTGVVGNANNTYLL), and 279–299 (TIPFIISLLVMMVFGYLNVGP).

The protein resides in the cell membrane. This is an uncharacterized protein from Mycoplasma pneumoniae (strain ATCC 29342 / M129 / Subtype 1) (Mycoplasmoides pneumoniae).